The following is an 882-amino-acid chain: Alanine--tRNA ligase (882 aa).

Zn(2+) contacts are provided by H568, H572, C670, and H674.

Belongs to the class-II aminoacyl-tRNA synthetase family. Zn(2+) is required as a cofactor.

The protein resides in the cytoplasm. The enzyme catalyses tRNA(Ala) + L-alanine + ATP = L-alanyl-tRNA(Ala) + AMP + diphosphate. In terms of biological role, catalyzes the attachment of alanine to tRNA(Ala) in a two-step reaction: alanine is first activated by ATP to form Ala-AMP and then transferred to the acceptor end of tRNA(Ala). Also edits incorrectly charged Ser-tRNA(Ala) and Gly-tRNA(Ala) via its editing domain. This Lactobacillus gasseri (strain ATCC 33323 / DSM 20243 / BCRC 14619 / CIP 102991 / JCM 1131 / KCTC 3163 / NCIMB 11718 / NCTC 13722 / AM63) protein is Alanine--tRNA ligase.